Reading from the N-terminus, the 219-residue chain is Elongation factor Ts (219 aa).

An involved in Mg(2+) ion dislocation from EF-Tu region spans residues 82-85; sequence TDFV.

Belongs to the EF-Ts family.

It localises to the cytoplasm. Associates with the EF-Tu.GDP complex and induces the exchange of GDP to GTP. It remains bound to the aminoacyl-tRNA.EF-Tu.GTP complex up to the GTP hydrolysis stage on the ribosome. In Synechococcus sp. (strain CC9902), this protein is Elongation factor Ts.